The sequence spans 941 residues: Bifunctional glutamine synthetase adenylyltransferase/adenylyl-removing enzyme (941 aa).

The tract at residues 1 to 431 is adenylyl removase; that stretch reads MSSAPPFAAA…TFRNAFRLAG (431 aa). An adenylyl transferase region spans residues 447 to 941; it reads NGHAMRPHAG…DGTIAQAEVK (495 aa).

It belongs to the GlnE family. The cofactor is Mg(2+).

It carries out the reaction [glutamine synthetase]-O(4)-(5'-adenylyl)-L-tyrosine + phosphate = [glutamine synthetase]-L-tyrosine + ADP. It catalyses the reaction [glutamine synthetase]-L-tyrosine + ATP = [glutamine synthetase]-O(4)-(5'-adenylyl)-L-tyrosine + diphosphate. Its function is as follows. Involved in the regulation of glutamine synthetase GlnA, a key enzyme in the process to assimilate ammonia. When cellular nitrogen levels are high, the C-terminal adenylyl transferase (AT) inactivates GlnA by covalent transfer of an adenylyl group from ATP to specific tyrosine residue of GlnA, thus reducing its activity. Conversely, when nitrogen levels are low, the N-terminal adenylyl removase (AR) activates GlnA by removing the adenylyl group by phosphorolysis, increasing its activity. The regulatory region of GlnE binds the signal transduction protein PII (GlnB) which indicates the nitrogen status of the cell. The chain is Bifunctional glutamine synthetase adenylyltransferase/adenylyl-removing enzyme from Bordetella pertussis (strain Tohama I / ATCC BAA-589 / NCTC 13251).